The chain runs to 88 residues: Protein U62 (88 aa).

This is Protein U62 from Elephantid herpesvirus 1 (isolate Asian elephant/Berlin/Kiba/1998) (EIHV-1).